Consider the following 308-residue polypeptide: Carbamate kinase (308 aa).

The protein belongs to the carbamate kinase family.

It is found in the cytoplasm. The catalysed reaction is hydrogencarbonate + NH4(+) + ATP = carbamoyl phosphate + ADP + H2O + H(+). The chain is Carbamate kinase from Synechocystis sp. (strain ATCC 27184 / PCC 6803 / Kazusa).